The sequence spans 235 residues: Aspartate/glutamate leucyltransferase (235 aa).

Belongs to the R-transferase family. Bpt subfamily.

It localises to the cytoplasm. The catalysed reaction is N-terminal L-glutamyl-[protein] + L-leucyl-tRNA(Leu) = N-terminal L-leucyl-L-glutamyl-[protein] + tRNA(Leu) + H(+). The enzyme catalyses N-terminal L-aspartyl-[protein] + L-leucyl-tRNA(Leu) = N-terminal L-leucyl-L-aspartyl-[protein] + tRNA(Leu) + H(+). Functionally, functions in the N-end rule pathway of protein degradation where it conjugates Leu from its aminoacyl-tRNA to the N-termini of proteins containing an N-terminal aspartate or glutamate. This Pseudomonas putida (strain GB-1) protein is Aspartate/glutamate leucyltransferase.